A 321-amino-acid chain; its full sequence is Ubiquitin-conjugating enzyme E2 U (321 aa).

A UBC core domain is found at 4-153 (RAYLLLHRDF…LRLFNRPLQM (150 aa)). Residue Cys-89 is the Glycyl thioester intermediate of the active site. Residues 285 to 321 (WKSDTSLYENDTDEPREEEVEDLISWTNTLNTNTSED) are disordered. Acidic residues predominate over residues 294–306 (NDTDEPREEEVED). Positions 309–321 (SWTNTLNTNTSED) are enriched in polar residues.

It belongs to the ubiquitin-conjugating enzyme family. Autoubiquitinated in vitro in the presence of UBR5.

It catalyses the reaction S-ubiquitinyl-[E1 ubiquitin-activating enzyme]-L-cysteine + [E2 ubiquitin-conjugating enzyme]-L-cysteine = [E1 ubiquitin-activating enzyme]-L-cysteine + S-ubiquitinyl-[E2 ubiquitin-conjugating enzyme]-L-cysteine.. Its pathway is protein modification; protein ubiquitination. Catalyzes the covalent attachment of ubiquitin to other proteins. This is Ubiquitin-conjugating enzyme E2 U (UBE2U) from Homo sapiens (Human).